We begin with the raw amino-acid sequence, 129 residues long: Cytochrome c oxidase subunit 5B, mitochondrial (129 aa).

The transit peptide at 1-31 directs the protein to the mitochondrion; sequence MASRLLRGVGALAAQALRAHGPRGVAATRSM. N6-acetyllysine is present on residues K68 and K86. C91, C93, C113, and C116 together coordinate Zn(2+). N6-acetyllysine is present on K121.

This sequence belongs to the cytochrome c oxidase subunit 5B family. Component of the cytochrome c oxidase (complex IV, CIV), a multisubunit enzyme composed of 14 subunits. The complex is composed of a catalytic core of 3 subunits MT-CO1, MT-CO2 and MT-CO3, encoded in the mitochondrial DNA, and 11 supernumerary subunits COX4I, COX5A, COX5B, COX6A, COX6B, COX6C, COX7A, COX7B, COX7C, COX8 and NDUFA4, which are encoded in the nuclear genome. The complex exists as a monomer or a dimer and forms supercomplexes (SCs) in the inner mitochondrial membrane with NADH-ubiquinone oxidoreductase (complex I, CI) and ubiquinol-cytochrome c oxidoreductase (cytochrome b-c1 complex, complex III, CIII), resulting in different assemblies (supercomplex SCI(1)III(2)IV(1) and megacomplex MCI(2)III(2)IV(2)).

The protein resides in the mitochondrion inner membrane. It functions in the pathway energy metabolism; oxidative phosphorylation. Its function is as follows. Component of the cytochrome c oxidase, the last enzyme in the mitochondrial electron transport chain which drives oxidative phosphorylation. The respiratory chain contains 3 multisubunit complexes succinate dehydrogenase (complex II, CII), ubiquinol-cytochrome c oxidoreductase (cytochrome b-c1 complex, complex III, CIII) and cytochrome c oxidase (complex IV, CIV), that cooperate to transfer electrons derived from NADH and succinate to molecular oxygen, creating an electrochemical gradient over the inner membrane that drives transmembrane transport and the ATP synthase. Cytochrome c oxidase is the component of the respiratory chain that catalyzes the reduction of oxygen to water. Electrons originating from reduced cytochrome c in the intermembrane space (IMS) are transferred via the dinuclear copper A center (CU(A)) of subunit 2 and heme A of subunit 1 to the active site in subunit 1, a binuclear center (BNC) formed by heme A3 and copper B (CU(B)). The BNC reduces molecular oxygen to 2 water molecules using 4 electrons from cytochrome c in the IMS and 4 protons from the mitochondrial matrix. The polypeptide is Cytochrome c oxidase subunit 5B, mitochondrial (Cox5b) (Rattus norvegicus (Rat)).